The sequence spans 295 residues: Acetyl-coenzyme A carboxylase carboxyl transferase subunit beta (295 aa).

Residues 1 to 20 (MSWLSKLMPSGIRTENTPAK) are disordered. The region spanning 28 to 295 (LWEKCSNCGS…QPHPQDADAA (268 aa)) is the CoA carboxyltransferase N-terminal domain. Zn(2+)-binding residues include Cys32, Cys35, Cys51, and Cys54. The segment at 32–54 (CSNCGSALYGPELEENLEVCPKC) adopts a C4-type zinc-finger fold.

Belongs to the AccD/PCCB family. Acetyl-CoA carboxylase is a heterohexamer composed of biotin carboxyl carrier protein (AccB), biotin carboxylase (AccC) and two subunits each of ACCase subunit alpha (AccA) and ACCase subunit beta (AccD). The cofactor is Zn(2+).

The protein resides in the cytoplasm. The enzyme catalyses N(6)-carboxybiotinyl-L-lysyl-[protein] + acetyl-CoA = N(6)-biotinyl-L-lysyl-[protein] + malonyl-CoA. It participates in lipid metabolism; malonyl-CoA biosynthesis; malonyl-CoA from acetyl-CoA: step 1/1. Its function is as follows. Component of the acetyl coenzyme A carboxylase (ACC) complex. Biotin carboxylase (BC) catalyzes the carboxylation of biotin on its carrier protein (BCCP) and then the CO(2) group is transferred by the transcarboxylase to acetyl-CoA to form malonyl-CoA. The protein is Acetyl-coenzyme A carboxylase carboxyl transferase subunit beta of Xanthomonas axonopodis pv. citri (strain 306).